We begin with the raw amino-acid sequence, 216 residues long: Octanoyltransferase (216 aa).

Residues 31–205 enclose the BPL/LPL catalytic domain; that stretch reads STTRDEVWLV…ELVTLLDYEQ (175 aa). Substrate-binding positions include 70–77, 137–139, and 150–152; these read RGGQVTYH, SLG, and GLA. C168 serves as the catalytic Acyl-thioester intermediate.

Belongs to the LipB family.

It is found in the cytoplasm. The catalysed reaction is octanoyl-[ACP] + L-lysyl-[protein] = N(6)-octanoyl-L-lysyl-[protein] + holo-[ACP] + H(+). It functions in the pathway protein modification; protein lipoylation via endogenous pathway; protein N(6)-(lipoyl)lysine from octanoyl-[acyl-carrier-protein]: step 1/2. Functionally, catalyzes the transfer of endogenously produced octanoic acid from octanoyl-acyl-carrier-protein onto the lipoyl domains of lipoate-dependent enzymes. Lipoyl-ACP can also act as a substrate although octanoyl-ACP is likely to be the physiological substrate. The protein is Octanoyltransferase of Vibrio cholerae serotype O1 (strain ATCC 39315 / El Tor Inaba N16961).